Reading from the N-terminus, the 311-residue chain is MVKRIFVQGLDSYTTESTVKKYFEQFGTLYECILPPPPRYSVFDNGPDEEKISTRSSIRYEPVENDDVLDDELDVERYDVEKHGDFESYMKKIGEGEAFIKEPRKTSAGYAYITFVDSNGYSNCMKSDIHEIDRAKCTVEPAKDENDKKLKVESKRLFVSYFPLDRLTSKELKMNFGAYGKITDVEFVSDSEGPLHFCIITFADSRSVDVLLTKSIYIRDVLMFTRRAVLKESVKIAEHKIKEQEQQNLVQLPPNHTAYLTPSRPVTSVHASSSASSNHYDPSAAAGYAPLYHQPPESDPLSQCGYGPRKW.

An RRM domain is found at 155–235; that stretch reads KRLFVSYFPL…RRAVLKESVK (81 aa). The span at 261-270 shows a compositional bias: polar residues; it reads TPSRPVTSVH. Residues 261–311 form a disordered region; the sequence is TPSRPVTSVHASSSASSNHYDPSAAAGYAPLYHQPPESDPLSQCGYGPRKW.

The sequence is that of Putative RNA-binding protein R05D3.8 from Caenorhabditis elegans.